The primary structure comprises 193 residues: NADH-quinone oxidoreductase subunit B (193 aa).

Cys-72, Cys-73, Cys-137, and Cys-167 together coordinate [4Fe-4S] cluster.

It belongs to the complex I 20 kDa subunit family. In terms of assembly, NDH-1 is composed of 14 different subunits. Subunits NuoB, C, D, E, F, and G constitute the peripheral sector of the complex. It depends on [4Fe-4S] cluster as a cofactor.

The protein localises to the cell inner membrane. The catalysed reaction is a quinone + NADH + 5 H(+)(in) = a quinol + NAD(+) + 4 H(+)(out). Functionally, NDH-1 shuttles electrons from NADH, via FMN and iron-sulfur (Fe-S) centers, to quinones in the respiratory chain. The immediate electron acceptor for the enzyme in this species is believed to be ubiquinone. Couples the redox reaction to proton translocation (for every two electrons transferred, four hydrogen ions are translocated across the cytoplasmic membrane), and thus conserves the redox energy in a proton gradient. This chain is NADH-quinone oxidoreductase subunit B, found in Rhizobium rhizogenes (strain K84 / ATCC BAA-868) (Agrobacterium radiobacter).